The following is a 572-amino-acid chain: Proline dehydrogenase 1, mitochondrial (572 aa).

Residues 105 to 124 show a composition bias toward low complexity; the sequence is NHSNQTNNVNNKNYNNNNNN. A disordered region spans residues 105–140; the sequence is NHSNQTNNVNNKNYNNNNNNFEKDDKFGPPNNQNNN.

It belongs to the proline oxidase family. The cofactor is FAD.

It is found in the mitochondrion matrix. The enzyme catalyses L-proline + a quinone = (S)-1-pyrroline-5-carboxylate + a quinol + H(+). It participates in amino-acid degradation; L-proline degradation into L-glutamate; L-glutamate from L-proline: step 1/2. Its function is as follows. Converts proline to delta-1-pyrroline-5-carboxylate. This Dictyostelium discoideum (Social amoeba) protein is Proline dehydrogenase 1, mitochondrial (prodh).